A 901-amino-acid polypeptide reads, in one-letter code: MLIPSKLSRPVRLDHTVVRERLLAKLSGANNFRLALVTSPAGYGKTTLVSQWAAGKNELGWYSLDEGDNQQERFASYLIAAIQQATGGHCSTSEAMAQKRQYASLTSLFAQLFIELAQWHRPLYLVIDDYHLITNPVIHDAMRFFLRHQPENFTLVVLSRNLPQLGIANLRVRDQLLEIGSQQLAFNHQEAKQFFDRRLSSPIEAAESSRMCDDVAGWATALQLIALSARQNHTSAHHSARRLAGINASHLSDYLVDEVLDNVDVSTRHFLLKSAILRSMNDALIVRVTGEENGQMRLEEIERQGLFLQRMDDTGEWFSYHPLFGSFLRQRCQWELAAELPEIHRAAAESWMEQGFPSEAIHHALAAGDAQMLRDILLNHAWGLFNHSELALLEESLKALPWESLLENPRLVLLQAWLMQSQHRYSEVNTLLARAEQEIKGVMDGTLHAEFNALRAQVAINDGNPEEAERLAKLALDELPLAWFYSRIVATSVHGEVLHCKGDLSQSLSLMQQTEQMARHHDVWHYALWSLIQQSEIQFAQGFLQAAWETQERAFQLIKEQHLEQLPMHEFLVRIRAQLLWAWARLDEAEASARSGIAVLSTFQPQQQLQCLTLLVQCSLARGDLDNARSQLNRLENLLGNGRYHCDWISNADKVRVIYWQLTGDKKSAANWLRHTPKPAFANNHFLQGQWRNIARAQILLGEFEPAEIVLEELNENARSLRLMSDLNRNLLLLNQLYWQSGRKNDAQRVLLDALQLANRTGFISHFVIEGEAMAQQLRQLIQLNTLPEMEQHRAQRILREINQHHRHKFAHFDEGFVERLLNHPDVPELIRTSPLTQREWQVLGLIYSGYSNEQIAGELAVAATTIKTHIRNLYQKLGVAHRQDAVQHAQQLLKMMGYGV.

An ATP-binding site is contributed by 39-46 (SPAGYGKT). An HTH luxR-type domain is found at 829–894 (ELIRTSPLTQ…DAVQHAQQLL (66 aa)). The H-T-H motif DNA-binding region spans 853-872 (NEQIAGELAVAATTIKTHIR).

The protein belongs to the MalT family. As to quaternary structure, monomer in solution. Oligomerizes to an active state in the presence of the positive effectors ATP and maltotriose.

Its activity is regulated as follows. Activated by ATP and maltotriose, which are both required for DNA binding. Its function is as follows. Positively regulates the transcription of the maltose regulon whose gene products are responsible for uptake and catabolism of malto-oligosaccharides. Specifically binds to the promoter region of its target genes, recognizing a short DNA motif called the MalT box. This Salmonella agona (strain SL483) protein is HTH-type transcriptional regulator MalT.